A 341-amino-acid chain; its full sequence is MQYTAAQSQSVAIIGASGYVGVELTRLVQQHPALSLLGCYVSEHSSDAGSLLSDLHPQYAHLVKLSLQGLSSQKKELIKSSADTVFLCTDHGVSVELAPEFLAAGLKVIDLSGGFRLNATEDYPSFYGFEHQQDSWLQQAVYGLAEWYPQEIAAAQLVAVPGCYPTAALMALLPVKQAGLLSCNKIIINAVSGVTGAGRKAALTSHGAELSLQAYGLFEHRHTPEIAQQLQHEVLFTPHLAQFPRGILATVYAELNDDVSDADLDKAYQCYADQPLVRFEKQARPAIKNVVQQPFVDIGWHRQGNQLIAFSAIDNLLKGAASQAIQCVNLQLGLALEEGLL.

The active site involves cysteine 163.

The protein belongs to the NAGSA dehydrogenase family. Type 1 subfamily.

The protein localises to the cytoplasm. The enzyme catalyses N-acetyl-L-glutamate 5-semialdehyde + phosphate + NADP(+) = N-acetyl-L-glutamyl 5-phosphate + NADPH + H(+). Its pathway is amino-acid biosynthesis; L-arginine biosynthesis; N(2)-acetyl-L-ornithine from L-glutamate: step 3/4. Its function is as follows. Catalyzes the NADPH-dependent reduction of N-acetyl-5-glutamyl phosphate to yield N-acetyl-L-glutamate 5-semialdehyde. The sequence is that of N-acetyl-gamma-glutamyl-phosphate reductase from Idiomarina loihiensis (strain ATCC BAA-735 / DSM 15497 / L2-TR).